A 464-amino-acid polypeptide reads, in one-letter code: MNFLRQFGFRFTTGHGIWAATLIPACIAICMHFDLLWLGITLGALIALFSVLTIRGLRITGWVRAIFSWRRRHRSTPDIASEPAVGSTVMPGDHVAVRWQGDYLIAVIELVPRPFTPTVIVNGSAMTDDVVNTKLVERLLEAHCPDLEADVVSAGYRVGKTAPASLIALYEQVVGPYPAPANRRTWIVLRADPEKTQRSAHRRDSGVSGLARYLVASATRIADQLASNGVDARCCRSFDDYEKATEISYERETWSSIKGRSTFTAAYTAPGGPDMWWSARADHTITRVRVRPGAAPSSAILLTTLANPTTPRGFSCLFGGQRAALQGIVPVSDKHYDLPIGSAGVLVGETADRYPVYMPFDNVDVSINLGDARLFTQFVIRSAAAGAVVTLGPQFREFATMINGRVGRTPRIGWPNATTYLGPHQGVGRVILRPNFIDTPRHRQLPIQLINPREESRYQMALEQ.

The next 2 helical transmembrane spans lie at 11-31 (FTTGHGIWAATLIPACIAICM) and 34-54 (DLLWLGITLGALIALFSVLTI).

It belongs to the EccE family. In terms of assembly, part of the ESX-1 / type VII secretion system (T7SS), which is composed of cytosolic and membrane components. The ESX-1 membrane complex is composed of EccB1, EccCa1, EccCb1, EccD1 and EccE1.

The protein localises to the cell inner membrane. Its function is as follows. Part of the ESX-1 / type VII specialized secretion system (T7SS), which exports several proteins including EsxA and EsxB. Plays a role in DNA conjugation, in at least a donor strain. The chain is ESX-1 secretion system protein EccE1 from Mycolicibacterium smegmatis (strain ATCC 700084 / mc(2)155) (Mycobacterium smegmatis).